A 430-amino-acid polypeptide reads, in one-letter code: Histone acetyltransferase type B subunit 2 (430 aa).

5 WD repeats span residues 129–169 (PHDG…ALTT), 180–220 (GHTA…FTSS), 233–273 (RHTD…EEEA), 279–319 (AHSK…QRLH), and 323–363 (GHED…EEQT). Residues 365–369 (EDAED) form an interaction with the histone H4 N-terminus region. The WD 6 repeat unit spans residues 380 to 420 (GHTNRISEFSWCPNERWVVGSLADDNILQIWSPSRVIWGRD). The residue at position 425 (Ser425) is a Phosphoserine.

Belongs to the WD repeat RBAP46/RBAP48/MSI1 family. In terms of assembly, component of the HAT-B complex composed of at least hat1 and hat2. The HAT-B complex binds to histone H4 tail. Component of the CENP-A recruiting complex composed of at least mis16, mis19, mis19 and mis20.

It is found in the cytoplasm. Its subcellular location is the nucleus. It localises to the chromosome. The protein resides in the centromere. The protein localises to the kinetochore. In terms of biological role, regulatory subunit of the histone acetylase B (HAT-B) complex. The complex acetylates 'Lys-12' of histone H4 which is required for telomeric silencing. Component of the CENP-A recruiting complex that ensures the integrity of mitotic spindles through maintenance of kinetochore factors mis6/CENP-I and cnp1/CENP-A. Maintains the deacetylated state of histones specifically in the central core of the centromeres. The sequence is that of Histone acetyltransferase type B subunit 2 (mis16) from Schizosaccharomyces pombe (strain 972 / ATCC 24843) (Fission yeast).